Consider the following 277-residue polypeptide: Large ribosomal subunit protein uL2c (277 aa).

The tract at residues 226–249 is disordered; that stretch reads NPIDHPHGGGEGRAPIGREKPLTP. Residues 229 to 246 are compositionally biased toward basic and acidic residues; the sequence is DHPHGGGEGRAPIGREKP.

The protein belongs to the universal ribosomal protein uL2 family. As to quaternary structure, part of the 50S ribosomal subunit.

It is found in the plastid. It localises to the chloroplast. In Physcomitrium patens (Spreading-leaved earth moss), this protein is Large ribosomal subunit protein uL2c (rpl2).